The chain runs to 631 residues: FAST kinase domain-containing protein 4 (631 aa).

A mitochondrion-targeting transit peptide spans 1–107 (MAAHLVKRCT…NQAAMVLIRL (107 aa)). Ser-553 is modified (phosphoserine). The RAP domain maps to 561–619 (LAFLRWEFPNFNSRSKDLLGRFVLARRHIVAAGFLIVDVPFYEWLELKSEWQKGAYLKD).

Belongs to the FAST kinase family. In terms of tissue distribution, ubiquitously expressed. Expression detected in spleen, thymus, testis, ovary, colon, heart, smooth muscle, kidney, brain, lung, liver and white adipose tissue with highest expression in smooth muscle.

The protein localises to the mitochondrion matrix. Functionally, plays a role in processing of mitochondrial RNA precursors and in stabilization of a subset of mature mitochondrial RNA species, such as MT-CO1, MT-CO2, MT-CYB, MT-CO3, MT-ND3, MT-ND5 and MT-ATP8/6. May play a role in cell cycle progression. The protein is FAST kinase domain-containing protein 4 of Homo sapiens (Human).